Reading from the N-terminus, the 742-residue chain is Phosphoribosylformylglycinamidine synthase subunit PurL (742 aa).

His-50 is an active-site residue. Residues Tyr-53 and Lys-92 each coordinate ATP. Glu-94 is a Mg(2+) binding site. Substrate contacts are provided by residues Ser-95 to His-98 and Arg-117. Residue His-96 is the Proton acceptor of the active site. Asp-118 is a binding site for Mg(2+). Substrate is bound at residue Gln-241. Asp-269 is a binding site for Mg(2+). Glu-313–Gln-315 is a binding site for substrate. Positions 494 and 531 each coordinate ATP. Asn-532 lines the Mg(2+) pocket. Position 534 (Ser-534) interacts with substrate.

The protein belongs to the FGAMS family. Monomer. Part of the FGAM synthase complex composed of 1 PurL, 1 PurQ and 2 PurS subunits.

The protein resides in the cytoplasm. The enzyme catalyses N(2)-formyl-N(1)-(5-phospho-beta-D-ribosyl)glycinamide + L-glutamine + ATP + H2O = 2-formamido-N(1)-(5-O-phospho-beta-D-ribosyl)acetamidine + L-glutamate + ADP + phosphate + H(+). The protein operates within purine metabolism; IMP biosynthesis via de novo pathway; 5-amino-1-(5-phospho-D-ribosyl)imidazole from N(2)-formyl-N(1)-(5-phospho-D-ribosyl)glycinamide: step 1/2. Part of the phosphoribosylformylglycinamidine synthase complex involved in the purines biosynthetic pathway. Catalyzes the ATP-dependent conversion of formylglycinamide ribonucleotide (FGAR) and glutamine to yield formylglycinamidine ribonucleotide (FGAM) and glutamate. The FGAM synthase complex is composed of three subunits. PurQ produces an ammonia molecule by converting glutamine to glutamate. PurL transfers the ammonia molecule to FGAR to form FGAM in an ATP-dependent manner. PurS interacts with PurQ and PurL and is thought to assist in the transfer of the ammonia molecule from PurQ to PurL. The sequence is that of Phosphoribosylformylglycinamidine synthase subunit PurL from Sinorhizobium fredii (strain NBRC 101917 / NGR234).